A 386-amino-acid chain; its full sequence is Probable family 17 glucosidase SCW4 (386 aa).

Residues 1–19 (MRLSNLIASASLLSAATLA) form the signal peptide. Residues 20-30 (APANHEHKDKR) constitute a propeptide that is removed on maturation. The tract at residues 88–127 (ENNSQVSAAASPASSSAATSTQSSSSSQASSSSSSGEDVS) is disordered. Asparagine 89 carries an N-linked (GlcNAc...) asparagine glycan. Catalysis depends on glutamate 323, which acts as the Nucleophile.

It belongs to the glycosyl hydrolase 17 family. In terms of processing, N-glycosylated.

It localises to the secreted. It is found in the cell wall. Functionally, glucanases possibly play a role in cell expansion during growth, in cell-cell fusion during mating, and in spore release during sporulation. The polypeptide is Probable family 17 glucosidase SCW4 (SCW4) (Saccharomyces cerevisiae (strain ATCC 204508 / S288c) (Baker's yeast)).